A 71-amino-acid chain; its full sequence is NAD(P)H-quinone oxidoreductase subunit O (71 aa).

It belongs to the complex I NdhO subunit family. As to quaternary structure, NDH-1 can be composed of about 15 different subunits; different subcomplexes with different compositions have been identified which probably have different functions.

The protein resides in the cellular thylakoid membrane. The catalysed reaction is a plastoquinone + NADH + (n+1) H(+)(in) = a plastoquinol + NAD(+) + n H(+)(out). It carries out the reaction a plastoquinone + NADPH + (n+1) H(+)(in) = a plastoquinol + NADP(+) + n H(+)(out). Its function is as follows. NDH-1 shuttles electrons from an unknown electron donor, via FMN and iron-sulfur (Fe-S) centers, to quinones in the respiratory and/or the photosynthetic chain. The immediate electron acceptor for the enzyme in this species is believed to be plastoquinone. Couples the redox reaction to proton translocation, and thus conserves the redox energy in a proton gradient. Cyanobacterial NDH-1 also plays a role in inorganic carbon-concentration. The sequence is that of NAD(P)H-quinone oxidoreductase subunit O from Microcystis aeruginosa (strain NIES-843 / IAM M-2473).